We begin with the raw amino-acid sequence, 160 residues long: UPF0178 protein PLES_56411 (160 aa).

It belongs to the UPF0178 family.

The sequence is that of UPF0178 protein PLES_56411 from Pseudomonas aeruginosa (strain LESB58).